The chain runs to 277 residues: Large ribosomal subunit protein uL2 (277 aa).

Residues 222–277 form a disordered region; it reads GVAMNPVDHPHGGGEGRTSGGRHPVTPWGKPTKGKKTRSNKATDKFIMRSRHQRKK.

This sequence belongs to the universal ribosomal protein uL2 family. Part of the 50S ribosomal subunit. Forms a bridge to the 30S subunit in the 70S ribosome.

In terms of biological role, one of the primary rRNA binding proteins. Required for association of the 30S and 50S subunits to form the 70S ribosome, for tRNA binding and peptide bond formation. It has been suggested to have peptidyltransferase activity; this is somewhat controversial. Makes several contacts with the 16S rRNA in the 70S ribosome. This chain is Large ribosomal subunit protein uL2, found in Brucella ovis (strain ATCC 25840 / 63/290 / NCTC 10512).